The following is a 631-amino-acid chain: Dolichyl-diphosphooligosaccharide--protein glycosyltransferase subunit 2 (631 aa).

The first 22 residues, 1 to 22 (MALPGSSTVFLLALTIIASTQA), serve as a signal peptide directing secretion. At 23 to 540 (LTPTHYLTKH…REPEKRPPTV (518 aa)) the chain is on the lumenal side. The N-linked (GlcNAc...) asparagine glycan is linked to asparagine 106. Residue lysine 154 forms a Glycyl lysine isopeptide (Lys-Gly) (interchain with G-Cter in ubiquitin) linkage. The chain crosses the membrane as a helical span at residues 541–561 (VSNTFTALILSPLLLLFALWI). Residues 562-571 (RIGANVSNFT) lie on the Cytoplasmic side of the membrane. A helical transmembrane segment spans residues 572-592 (FAPSTIVFHLGHAAMLGLMYV). The Lumenal portion of the chain corresponds to 593 to 596 (YWTQ). Residues 597-617 (LNMFQTLKYLAILGSVTFLAG) traverse the membrane as a helical segment. The Cytoplasmic segment spans residues 618–631 (NRMLAQQAIKRTAH).

It belongs to the SWP1 family. Component of the oligosaccharyltransferase (OST) complex. OST exists in two different complex forms which contain common core subunits RPN1, RPN2, OST48, OST4, DAD1 and TMEM258, either STT3A or STT3B as catalytic subunits, and form-specific accessory subunits. STT3A complex assembly occurs through the formation of 3 subcomplexes. Subcomplex 1 contains RPN1 and TMEM258, subcomplex 2 contains the STT3A-specific subunits STT3A, DC2/OSTC, and KCP2 as well as the core subunit OST4, and subcomplex 3 contains RPN2, DAD1, and OST48. The STT3A complex can form stable complexes with the Sec61 complex or with both the Sec61 and TRAP complexes. Interacts with DDI2. Interacts with TMEM35A/NACHO.

The protein resides in the endoplasmic reticulum. The protein localises to the endoplasmic reticulum membrane. It functions in the pathway protein modification; protein glycosylation. Functionally, subunit of the oligosaccharyl transferase (OST) complex that catalyzes the initial transfer of a defined glycan (Glc(3)Man(9)GlcNAc(2) in eukaryotes) from the lipid carrier dolichol-pyrophosphate to an asparagine residue within an Asn-X-Ser/Thr consensus motif in nascent polypeptide chains, the first step in protein N-glycosylation. N-glycosylation occurs cotranslationally and the complex associates with the Sec61 complex at the channel-forming translocon complex that mediates protein translocation across the endoplasmic reticulum (ER). All subunits are required for a maximal enzyme activity. This Bos taurus (Bovine) protein is Dolichyl-diphosphooligosaccharide--protein glycosyltransferase subunit 2.